The following is a 176-amino-acid chain: ATP synthase subunit b (176 aa).

The chain crosses the membrane as a helical span at residues 27-47 (FFVFSFLTLILVVTIVTLLVY).

The protein belongs to the ATPase B chain family. As to quaternary structure, F-type ATPases have 2 components, F(1) - the catalytic core - and F(0) - the membrane proton channel. F(1) has five subunits: alpha(3), beta(3), gamma(1), delta(1), epsilon(1). F(0) has three main subunits: a(1), b(2) and c(10-14). The alpha and beta chains form an alternating ring which encloses part of the gamma chain. F(1) is attached to F(0) by a central stalk formed by the gamma and epsilon chains, while a peripheral stalk is formed by the delta and b chains.

The protein resides in the cell membrane. Its function is as follows. F(1)F(0) ATP synthase produces ATP from ADP in the presence of a proton or sodium gradient. F-type ATPases consist of two structural domains, F(1) containing the extramembraneous catalytic core and F(0) containing the membrane proton channel, linked together by a central stalk and a peripheral stalk. During catalysis, ATP synthesis in the catalytic domain of F(1) is coupled via a rotary mechanism of the central stalk subunits to proton translocation. In terms of biological role, component of the F(0) channel, it forms part of the peripheral stalk, linking F(1) to F(0). The protein is ATP synthase subunit b of Metamycoplasma arthritidis (strain 158L3-1) (Mycoplasma arthritidis).